The following is a 65-amino-acid chain: Putative beta-neurotoxin RjAa12 (65 aa).

In terms of domain architecture, LCN-type CS-alpha/beta spans Lys-1–Gly-64. 4 disulfides stabilise this stretch: Cys-11-Cys-63, Cys-15-Cys-37, Cys-22-Cys-44, and Cys-26-Cys-46.

It belongs to the long (4 C-C) scorpion toxin superfamily. Sodium channel inhibitor family. Beta subfamily. In terms of tissue distribution, expressed by the venom gland.

It localises to the secreted. Its function is as follows. Beta toxins bind voltage-independently at site-4 of sodium channels (Nav) and shift the voltage of activation toward more negative potentials thereby affecting sodium channel activation and promoting spontaneous and repetitive firing. This Rhopalurus junceus (Caribbean blue scorpion) protein is Putative beta-neurotoxin RjAa12.